A 672-amino-acid chain; its full sequence is tRNA 5-methylaminomethyl-2-thiouridine biosynthesis bifunctional protein MnmC (672 aa).

The segment at 1–243 is tRNA (mnm(5)s(2)U34)-methyltransferase; it reads MTSIKNAELG…KREMIAGSME (243 aa). The FAD-dependent cmnm(5)s(2)U34 oxidoreductase stretch occupies residues 269–672; it reads IGGGIASAAL…LRKGKAITEL (404 aa).

This sequence in the N-terminal section; belongs to the methyltransferase superfamily. tRNA (mnm(5)s(2)U34)-methyltransferase family. In the C-terminal section; belongs to the DAO family. It depends on FAD as a cofactor.

The protein localises to the cytoplasm. It carries out the reaction 5-aminomethyl-2-thiouridine(34) in tRNA + S-adenosyl-L-methionine = 5-methylaminomethyl-2-thiouridine(34) in tRNA + S-adenosyl-L-homocysteine + H(+). In terms of biological role, catalyzes the last two steps in the biosynthesis of 5-methylaminomethyl-2-thiouridine (mnm(5)s(2)U) at the wobble position (U34) in tRNA. Catalyzes the FAD-dependent demodification of cmnm(5)s(2)U34 to nm(5)s(2)U34, followed by the transfer of a methyl group from S-adenosyl-L-methionine to nm(5)s(2)U34, to form mnm(5)s(2)U34. This chain is tRNA 5-methylaminomethyl-2-thiouridine biosynthesis bifunctional protein MnmC, found in Vibrio campbellii (strain ATCC BAA-1116).